The primary structure comprises 398 residues: O-methyltransferase mpaG (398 aa).

Ser144 contacts (4E,8E)-10-(4,6-dihydroxy-7-methyl-3-oxo-1,3-dihydro-2-benzofuran-5-yl)-4,8-dimethyldeca-4,8-dienoate. Residue Ser144 participates in 4-farnesyl-3,5-dihydroxy-6-methylphthalide binding. Ser144 contacts 6-O-desmethylmycophenolate. Residue Asn197 coordinates S-adenosyl-L-homocysteine. A (4E,8E)-10-(4,6-dihydroxy-7-methyl-3-oxo-1,3-dihydro-2-benzofuran-5-yl)-4,8-dimethyldeca-4,8-dienoate-binding site is contributed by Tyr199. Position 199 (Tyr199) interacts with 4-farnesyl-3,5-dihydroxy-6-methylphthalide. Tyr199 is a binding site for 6-O-desmethylmycophenolate. Residues Tyr203, Asp237, Gly239, His244, Asp245, Asp264, and Arg265 each contribute to the S-adenosyl-L-homocysteine site. S-adenosyl-L-methionine is bound at residue Asp264. (4E,8E)-10-(4,6-dihydroxy-7-methyl-3-oxo-1,3-dihydro-2-benzofuran-5-yl)-4,8-dimethyldeca-4,8-dienoate-binding residues include Arg265 and Gln267. 6-O-desmethylmycophenolate is bound at residue Arg265. Residues Asp286, Ile287, and His302 each coordinate S-adenosyl-L-homocysteine. Ser303 is a binding site for (4E,8E)-10-(4,6-dihydroxy-7-methyl-3-oxo-1,3-dihydro-2-benzofuran-5-yl)-4,8-dimethyldeca-4,8-dienoate. Ser303 contributes to the 4-farnesyl-3,5-dihydroxy-6-methylphthalide binding site. Ser303 is a 6-O-desmethylmycophenolate binding site. The active-site Proton acceptor is His306. Active-site residues include Glu335 and Glu362.

It belongs to the class I-like SAM-binding methyltransferase superfamily. Cation-independent O-methyltransferase family. COMT subfamily. As to quaternary structure, homodimer.

The protein localises to the cytoplasm. The protein resides in the cytosol. The catalysed reaction is (4E,8E)-10-(4,6-dihydroxy-7-methyl-3-oxo-1,3-dihydro-2-benzofuran-5-yl)-4,8-dimethyldeca-4,8-dienoate + S-adenosyl-L-methionine = (4E,8E)-10-(4-hydroxy-6-methoxy-7-methyl-3-oxo-1,3-dihydro-2-benzofuran-5-yl)-4,8-dimethyldeca-4,8-dienoate + S-adenosyl-L-homocysteine + H(+). The enzyme catalyses 4-farnesyl-3,5-dihydroxy-6-methylphthalide + S-adenosyl-L-methionine = 4-farnesyl-3,5-dihydroxy-6-methoxylphthalide + S-adenosyl-L-homocysteine + H(+). It catalyses the reaction 6-O-desmethylmycophenolate + S-adenosyl-L-methionine = mycophenolate + S-adenosyl-L-homocysteine + H(+). Its pathway is secondary metabolite biosynthesis; terpenoid biosynthesis. In terms of biological role, O-methyltransferase; part of the gene cluster that mediates the biosynthesis of mycophenolic acid (MPA), the first isolated antibiotic natural product in the world obtained from a culture of Penicillium brevicompactum in 1893. MpaG methylates farnesyl-DHMP-3C (FDHMP-3C) to yield MFDHMP-3C. The first step of the pathway is the synthesis of 5-methylorsellinic acid (5MOA) by the cytosolic polyketide synthase mpaC. 5MOA is then converted to the phthalide compound 5,7-dihydroxy-4,6-dimethylphthalide (DHMP) by the endoplasmic reticulum-bound cytochrome P450 monooxygenase mpaDE. MpaDE first catalyzes hydroxylation of 5-MOA to 4,6-dihydroxy-2-(hydroxymethyl)-3-methylbenzoic acid (DHMB). MpaDE then acts as a lactone synthase that catalyzes the ring closure to convert DHMB into DHMP. The next step is the prenylation of DHMP by the Golgi apparatus-associated prenyltransferase mpaA to yield farnesyl-DHMP (FDHMP). The ER-bound oxygenase mpaB then mediates the oxidative cleavage the C19-C20 double bond in FDHMP to yield FDHMP-3C via a mycophenolic aldehyde intermediate. The O-methyltransferase mpaG catalyzes the methylation of FDHMP-3C to yield MFDHMP-3C. MpaG and mpaB can also switch the order in which they act and, in this case, the conversion of FDHMP to MFDHMP-3C can take place via 5-O-methyl-FDHMP (MFDHMP). After the cytosolic methylation of FDHMP-3C, MFDHMP-3C enters into peroxisomes probably via free diffusion due to its low molecular weight. Upon a peroxisomal CoA ligation reaction, catalyzed by a beta-oxidation component enzyme acyl-CoA ligase ACL891, MFDHMP-3C-CoA would then be restricted to peroxisomes for the following beta-oxidation pathway steps. The peroxisomal beta-oxidation machinery than converts MFDHMP-3C-CoA into MPA_CoA, via a beta-oxidation chain-shortening process. Finally mpaH acts as a peroxisomal acyl-CoA hydrolase with high substrate specificity toward MPA-CoA to release the final product MPA. MpaH can also hydrolyze DMMPA-CoA to release demethylmycophenolic acid (DMMPA) that is further converted to MPA by mpaG. The chain is O-methyltransferase mpaG from Penicillium brevicompactum.